The primary structure comprises 162 residues: Endoribonuclease YbeY (162 aa).

Zn(2+)-binding residues include H128, H132, and H138.

This sequence belongs to the endoribonuclease YbeY family. Zn(2+) is required as a cofactor.

It is found in the cytoplasm. Functionally, single strand-specific metallo-endoribonuclease involved in late-stage 70S ribosome quality control and in maturation of the 3' terminus of the 16S rRNA. In Levilactobacillus brevis (strain ATCC 367 / BCRC 12310 / CIP 105137 / JCM 1170 / LMG 11437 / NCIMB 947 / NCTC 947) (Lactobacillus brevis), this protein is Endoribonuclease YbeY.